The chain runs to 61 residues: Metallothionein-1C (61 aa).

The segment at 1 to 29 is beta; the sequence is MDPNCSCSTGGSCSCAGSCTCKACRCTSC. A divalent metal cation-binding residues include Cys5, Cys7, Cys13, Cys15, Cys19, Cys21, Cys24, Cys26, Cys29, Cys33, Cys34, Cys36, Cys37, Cys41, Cys44, Cys48, Cys50, Cys57, Cys59, and Cys60. The interval 30-61 is alpha; that stretch reads KKSCCSCCPAGCARCAQGCICKGASDKCSCCA.

This sequence belongs to the metallothionein superfamily. Type 1 family. As to quaternary structure, monomer.

Metallothioneins have a high content of cysteine residues that bind various heavy metals; these proteins are transcriptionally regulated by both heavy metals and glucocorticoids. In Sus scrofa (Pig), this protein is Metallothionein-1C (MT1C).